A 498-amino-acid chain; its full sequence is Glycerol kinase (498 aa).

Threonine 12 contributes to the ADP binding site. 3 residues coordinate ATP: threonine 12, threonine 13, and serine 14. Residue threonine 12 coordinates sn-glycerol 3-phosphate. Residue arginine 16 participates in ADP binding. Sn-glycerol 3-phosphate-binding residues include arginine 82, glutamate 83, tyrosine 134, and aspartate 243. Positions 82, 83, 134, 243, and 244 each coordinate glycerol. ADP is bound by residues threonine 265 and glycine 308. ATP-binding residues include threonine 265, glycine 308, glutamine 312, and glycine 411. Position 411 (glycine 411) interacts with ADP.

This sequence belongs to the FGGY kinase family.

It carries out the reaction glycerol + ATP = sn-glycerol 3-phosphate + ADP + H(+). It participates in polyol metabolism; glycerol degradation via glycerol kinase pathway; sn-glycerol 3-phosphate from glycerol: step 1/1. Inhibited by fructose 1,6-bisphosphate (FBP). Its function is as follows. Key enzyme in the regulation of glycerol uptake and metabolism. Catalyzes the phosphorylation of glycerol to yield sn-glycerol 3-phosphate. The polypeptide is Glycerol kinase (Brucella suis biovar 1 (strain 1330)).